Consider the following 618-residue polypeptide: DNA mismatch repair protein MutL (618 aa).

Over residues 367–381 (EPTAAREPATPRYSG) the composition is skewed to low complexity. Residues 367-402 (EPTAAREPATPRYSGGASGGNGGRQSAGGWPHAQPG) are disordered. The segment covering 382 to 392 (GASGGNGGRQS) has biased composition (gly residues).

The protein belongs to the DNA mismatch repair MutL/HexB family.

Its function is as follows. This protein is involved in the repair of mismatches in DNA. It is required for dam-dependent methyl-directed DNA mismatch repair. May act as a 'molecular matchmaker', a protein that promotes the formation of a stable complex between two or more DNA-binding proteins in an ATP-dependent manner without itself being part of a final effector complex. The protein is DNA mismatch repair protein MutL of Salmonella gallinarum (strain 287/91 / NCTC 13346).